Here is a 618-residue protein sequence, read N- to C-terminus: Dihydroxy-acid dehydratase (618 aa).

Position 81 (D81) interacts with Mg(2+). C122 serves as a coordination point for [2Fe-2S] cluster. 2 residues coordinate Mg(2+): D123 and K124. N6-carboxylysine is present on K124. A [2Fe-2S] cluster-binding site is contributed by C195. Residue E491 coordinates Mg(2+). S517 (proton acceptor) is an active-site residue.

Belongs to the IlvD/Edd family. In terms of assembly, homodimer. Requires [2Fe-2S] cluster as cofactor. Mg(2+) is required as a cofactor.

It carries out the reaction (2R)-2,3-dihydroxy-3-methylbutanoate = 3-methyl-2-oxobutanoate + H2O. The enzyme catalyses (2R,3R)-2,3-dihydroxy-3-methylpentanoate = (S)-3-methyl-2-oxopentanoate + H2O. The protein operates within amino-acid biosynthesis; L-isoleucine biosynthesis; L-isoleucine from 2-oxobutanoate: step 3/4. It functions in the pathway amino-acid biosynthesis; L-valine biosynthesis; L-valine from pyruvate: step 3/4. In terms of biological role, functions in the biosynthesis of branched-chain amino acids. Catalyzes the dehydration of (2R,3R)-2,3-dihydroxy-3-methylpentanoate (2,3-dihydroxy-3-methylvalerate) into 2-oxo-3-methylpentanoate (2-oxo-3-methylvalerate) and of (2R)-2,3-dihydroxy-3-methylbutanoate (2,3-dihydroxyisovalerate) into 2-oxo-3-methylbutanoate (2-oxoisovalerate), the penultimate precursor to L-isoleucine and L-valine, respectively. The sequence is that of Dihydroxy-acid dehydratase from Dechloromonas aromatica (strain RCB).